The chain runs to 665 residues: LisH domain-containing protein ARMC9 (665 aa).

The region spanning 7–39 (HESELLGLVKEYLDFAEFEDTLKTFSKECKIKG) is the LisH domain. Residues 201–235 (ENGQSNKEMLQQLHQQLVEAERRSMTYLKRYNKIQ) are a coiled coil. Serine 582 bears the Phosphoserine mark. Residues 642–665 (VQWSGDEPLQRPVTPGGHRNGYPV) are disordered.

In terms of assembly, interacts with TOGARAM1, CCDC66, CEP104, CSPP1 and CEP290. Interacts with NDUFAF2.

The protein resides in the cytoplasm. It is found in the cytoskeleton. It localises to the cilium basal body. Its subcellular location is the cell projection. The protein localises to the cilium. The protein resides in the microtubule organizing center. It is found in the centrosome. It localises to the centriole. Functionally, involved in ciliogenesis. It is required for appropriate acetylation and polyglutamylation of ciliary microtubules, and regulation of cilium length. Acts as a positive regulator of hedgehog (Hh)signaling. May participate in the trafficking and/or retention of GLI2 and GLI3 proteins at the ciliary tip. This Pongo abelii (Sumatran orangutan) protein is LisH domain-containing protein ARMC9 (ARMC9).